A 477-amino-acid polypeptide reads, in one-letter code: Glycogen synthase (477 aa).

An ADP-alpha-D-glucose-binding site is contributed by K15.

This sequence belongs to the glycosyltransferase 1 family. Bacterial/plant glycogen synthase subfamily.

It catalyses the reaction [(1-&gt;4)-alpha-D-glucosyl](n) + ADP-alpha-D-glucose = [(1-&gt;4)-alpha-D-glucosyl](n+1) + ADP + H(+). The protein operates within glycan biosynthesis; glycogen biosynthesis. Functionally, synthesizes alpha-1,4-glucan chains using ADP-glucose. The chain is Glycogen synthase from Escherichia fergusonii (strain ATCC 35469 / DSM 13698 / CCUG 18766 / IAM 14443 / JCM 21226 / LMG 7866 / NBRC 102419 / NCTC 12128 / CDC 0568-73).